The primary structure comprises 255 residues: Ribonuclease HII (255 aa).

Residues 73-255 (LYIGGIDEAG…HRKSFLKNIL (183 aa)) enclose the RNase H type-2 domain. Residues aspartate 79, glutamate 80, and aspartate 171 each contribute to the a divalent metal cation site.

The protein belongs to the RNase HII family. The cofactor is Mn(2+). Mg(2+) serves as cofactor.

Its subcellular location is the cytoplasm. It carries out the reaction Endonucleolytic cleavage to 5'-phosphomonoester.. In terms of biological role, endonuclease that specifically degrades the RNA of RNA-DNA hybrids. The protein is Ribonuclease HII of Clostridioides difficile (strain 630) (Peptoclostridium difficile).